Consider the following 269-residue polypeptide: Auxin-responsive protein IAA26 (269 aa).

Over residues 25 to 40 (YQEDKNNTDQEKKLEL) the composition is skewed to basic and acidic residues. 2 disordered regions span residues 25–55 (YQED…HSAI) and 76–146 (CFNG…KQVE). Residues 38–42 (LELRL) carry the EAR-like (transcriptional repression) motif. Polar residues-rich tracts occupy residues 80–93 (NHFS…SVPH) and 117–136 (LAST…GQIN). Basic and acidic residues predominate over residues 137–146 (KSDDGEKQVE). The PB1 domain occupies 151–250 (GMFVKINMDG…SVKRLRVIKS (100 aa)).

This sequence belongs to the Aux/IAA family. Homodimers and heterodimers. Interacts with phytochrome A. Interacts with TPL.

It is found in the nucleus. In terms of biological role, aux/IAA proteins are short-lived transcriptional factors that function as repressors of early auxin response genes at low auxin concentrations. Repression is thought to result from the interaction with auxin response factors (ARFs), proteins that bind to the auxin-responsive promoter element (AuxRE). Formation of heterodimers with ARF proteins may alter their ability to modulate early auxin response genes expression. The protein is Auxin-responsive protein IAA26 (IAA26) of Arabidopsis thaliana (Mouse-ear cress).